The following is a 257-amino-acid chain: 3-methyl-2-oxobutanoate hydroxymethyltransferase (257 aa).

Positions 42 and 86 each coordinate Mg(2+). Residues 42–43 (DS), aspartate 86, and lysine 116 contribute to the 3-methyl-2-oxobutanoate site. Mg(2+) is bound at residue glutamate 118. The active-site Proton acceptor is the glutamate 185.

This sequence belongs to the PanB family. As to quaternary structure, homodecamer; pentamer of dimers. Mg(2+) serves as cofactor.

It is found in the cytoplasm. The catalysed reaction is 3-methyl-2-oxobutanoate + (6R)-5,10-methylene-5,6,7,8-tetrahydrofolate + H2O = 2-dehydropantoate + (6S)-5,6,7,8-tetrahydrofolate. It participates in cofactor biosynthesis; (R)-pantothenate biosynthesis; (R)-pantoate from 3-methyl-2-oxobutanoate: step 1/2. In terms of biological role, catalyzes the reversible reaction in which hydroxymethyl group from 5,10-methylenetetrahydrofolate is transferred onto alpha-ketoisovalerate to form ketopantoate. In Prochlorococcus marinus (strain AS9601), this protein is 3-methyl-2-oxobutanoate hydroxymethyltransferase.